Here is a 66-residue protein sequence, read N- to C-terminus: Small vasohibin-binding protein (66 aa).

Residues 1 to 23 (MDPPARKEKTKVKESVSRVEKAK) show a composition bias toward basic and acidic residues. Residues 1–31 (MDPPARKEKTKVKESVSRVEKAKQKSAQQEL) are disordered. Positions 5 to 52 (ARKEKTKVKESVSRVEKAKQKSAQQELKQRQRAEIYALNRVMTELEQQ) form a coiled coil.

This sequence belongs to the SVBP family. In terms of assembly, interacts with VASH1 and VASH2.

It is found in the cytoplasm. Its subcellular location is the secreted. The protein localises to the cytoskeleton. In terms of biological role, enhances the tyrosine carboxypeptidase activity of VASH1 and VASH2, thereby promoting the removal of the C-terminal tyrosine residue of alpha-tubulin. This activity is critical for spindle function and accurate chromosome segregation during mitosis since microtubule detyronisation regulates mitotic spindle length and postioning. Also required to enhance the solubility and secretion of VASH1 and VASH2. Plays a role in axon and excitatory synapse formation. This Homo sapiens (Human) protein is Small vasohibin-binding protein.